A 265-amino-acid polypeptide reads, in one-letter code: Phosphate import ATP-binding protein PstB 2 (265 aa).

The ABC transporter domain maps to 13–260 (FRTENLNVYY…PTKQATRDYV (248 aa)). 45–52 (GPSGCGKS) provides a ligand contact to ATP.

Belongs to the ABC transporter superfamily. Phosphate importer (TC 3.A.1.7) family. In terms of assembly, the complex is composed of two ATP-binding proteins (PstB), two transmembrane proteins (PstC and PstA) and a solute-binding protein (PstS).

Its subcellular location is the cell inner membrane. It carries out the reaction phosphate(out) + ATP + H2O = ADP + 2 phosphate(in) + H(+). In terms of biological role, part of the ABC transporter complex PstSACB involved in phosphate import. Responsible for energy coupling to the transport system. This chain is Phosphate import ATP-binding protein PstB 2, found in Synechococcus sp. (strain JA-3-3Ab) (Cyanobacteria bacterium Yellowstone A-Prime).